The chain runs to 427 residues: D-inositol 3-phosphate glycosyltransferase (427 aa).

Residue histidine 12 participates in 1D-myo-inositol 3-phosphate binding. UDP-N-acetyl-alpha-D-glucosamine is bound by residues 18-19 (QP) and glycine 26. 1D-myo-inositol 3-phosphate contacts are provided by residues 23–28 (DAGGMN), lysine 81, tyrosine 113, threonine 137, and arginine 157. Arginine 234, lysine 239, and arginine 297 together coordinate UDP-N-acetyl-alpha-D-glucosamine. Mg(2+) contacts are provided by tyrosine 306, glutamine 307, and alanine 309. Positions 319 and 327 each coordinate UDP-N-acetyl-alpha-D-glucosamine. Threonine 333 contacts Mg(2+).

The protein belongs to the glycosyltransferase group 1 family. MshA subfamily. In terms of assembly, homodimer.

It carries out the reaction 1D-myo-inositol 3-phosphate + UDP-N-acetyl-alpha-D-glucosamine = 1D-myo-inositol 2-acetamido-2-deoxy-alpha-D-glucopyranoside 3-phosphate + UDP + H(+). Functionally, catalyzes the transfer of a N-acetyl-glucosamine moiety to 1D-myo-inositol 3-phosphate to produce 1D-myo-inositol 2-acetamido-2-deoxy-glucopyranoside 3-phosphate in the mycothiol biosynthesis pathway. The protein is D-inositol 3-phosphate glycosyltransferase of Corynebacterium diphtheriae (strain ATCC 700971 / NCTC 13129 / Biotype gravis).